Here is a 799-residue protein sequence, read N- to C-terminus: Probable inorganic carbon transporter subunit DabA (799 aa).

Zn(2+)-binding residues include C303, D305, H479, and C494. The disordered stretch occupies residues 574-598; that stretch reads AGAAAERSEALNGADPDKGVSETAS.

This sequence belongs to the inorganic carbon transporter (TC 9.A.2) DabA family. As to quaternary structure, forms a complex with DabB. Zn(2+) is required as a cofactor.

It localises to the cell membrane. Its function is as follows. Part of an energy-coupled inorganic carbon pump. The protein is Probable inorganic carbon transporter subunit DabA of Natronomonas pharaonis (strain ATCC 35678 / DSM 2160 / CIP 103997 / JCM 8858 / NBRC 14720 / NCIMB 2260 / Gabara) (Halobacterium pharaonis).